The sequence spans 168 residues: MPLLDSFKVDHTRMNAPAVRIAKTMQTPKGDNITVFDLRFCIPNKEILSSKGIHTLEHLFAGFMRDHLNNEQVEIIDISPMGCRTGFYMSLIGTPNEQQVAEAWLISMQDILNIKNQDEIPELNEYQCGTYTEHSLEEAQNIAQNILHRGVGINKNEDLLLDDNLLNS.

Fe cation contacts are provided by histidine 54, histidine 58, and cysteine 128.

It belongs to the LuxS family. Homodimer. The cofactor is Fe cation.

It catalyses the reaction S-(5-deoxy-D-ribos-5-yl)-L-homocysteine = (S)-4,5-dihydroxypentane-2,3-dione + L-homocysteine. In terms of biological role, involved in the synthesis of autoinducer 2 (AI-2) which is secreted by bacteria and is used to communicate both the cell density and the metabolic potential of the environment. The regulation of gene expression in response to changes in cell density is called quorum sensing. Catalyzes the transformation of S-ribosylhomocysteine (RHC) to homocysteine (HC) and 4,5-dihydroxy-2,3-pentadione (DPD). The protein is S-ribosylhomocysteine lyase of Histophilus somni (strain 129Pt) (Haemophilus somnus).